A 443-amino-acid chain; its full sequence is Type I restriction enzyme HindI methylase subunit (443 aa).

Residues 117-122 (QYFTPK), 146-148 (SGG), and Glu-173 each bind S-adenosyl-L-methionine.

The protein belongs to the N(4)/N(6)-methyltransferase family. The type I restriction/modification system is composed of three polypeptides R, M and S; the restriction enzyme has stoichiometry R(2)M(2)S(1) while the methyltransferase is M(2)S(1).

It carries out the reaction a 2'-deoxyadenosine in DNA + S-adenosyl-L-methionine = an N(6)-methyl-2'-deoxyadenosine in DNA + S-adenosyl-L-homocysteine + H(+). In terms of biological role, the subtype gamma methyltransferase (M) subunit of a type I restriction enzyme. The M and S subunits together form a methyltransferase (MTase) that methylates adenosines in the sequence 5'-RAACN(5)TAG-3'. Methylation protects against cleavage by HindI. In the presence of the R subunit the complex can also act as an endonuclease, binding to the same target sequence but cutting the DNA some distance from this site. Whether the DNA is cut or modified depends on the methylation state of the target sequence. When the target site is unmodified, the DNA is cut. When the target site is hemimethylated, the complex acts as a maintenance MTase modifying the DNA so that both strands become methylated. After locating a non-methylated recognition site, the enzyme complex serves as a molecular motor that translocates DNA in an ATP-dependent manner until a collision occurs that triggers cleavage. This chain is Type I restriction enzyme HindI methylase subunit, found in Haemophilus influenzae (strain ATCC 51907 / DSM 11121 / KW20 / Rd).